The sequence spans 310 residues: Methionyl-tRNA formyltransferase (310 aa).

Position 111–114 (111–114 (SLLP)) interacts with (6S)-5,6,7,8-tetrahydrofolate.

Belongs to the Fmt family.

It carries out the reaction L-methionyl-tRNA(fMet) + (6R)-10-formyltetrahydrofolate = N-formyl-L-methionyl-tRNA(fMet) + (6S)-5,6,7,8-tetrahydrofolate + H(+). Functionally, attaches a formyl group to the free amino group of methionyl-tRNA(fMet). The formyl group appears to play a dual role in the initiator identity of N-formylmethionyl-tRNA by promoting its recognition by IF2 and preventing the misappropriation of this tRNA by the elongation apparatus. The sequence is that of Methionyl-tRNA formyltransferase from Rhodopseudomonas palustris (strain BisB18).